The primary structure comprises 357 residues: Cobalt-precorrin-5B C(1)-methyltransferase (357 aa).

Belongs to the CbiD family.

The catalysed reaction is Co-precorrin-5B + S-adenosyl-L-methionine = Co-precorrin-6A + S-adenosyl-L-homocysteine. It functions in the pathway cofactor biosynthesis; adenosylcobalamin biosynthesis; cob(II)yrinate a,c-diamide from sirohydrochlorin (anaerobic route): step 6/10. Catalyzes the methylation of C-1 in cobalt-precorrin-5B to form cobalt-precorrin-6A. This Rhodospirillum rubrum (strain ATCC 11170 / ATH 1.1.1 / DSM 467 / LMG 4362 / NCIMB 8255 / S1) protein is Cobalt-precorrin-5B C(1)-methyltransferase.